A 134-amino-acid polypeptide reads, in one-letter code: Small ribosomal subunit protein uS11 (134 aa).

It belongs to the universal ribosomal protein uS11 family. In terms of assembly, part of the 30S ribosomal subunit. Interacts with proteins S7 and S18. Binds to IF-3.

In terms of biological role, located on the platform of the 30S subunit, it bridges several disparate RNA helices of the 16S rRNA. Forms part of the Shine-Dalgarno cleft in the 70S ribosome. This Corynebacterium jeikeium (strain K411) protein is Small ribosomal subunit protein uS11.